A 73-amino-acid polypeptide reads, in one-letter code: Mucroporin-like peptide (73 aa).

Residues 1–22 (MKVKCLLAVFLIVLIAAEHCQA) form the signal peptide. Lysine 38 bears the Lysine amide mark. A propeptide spanning residues 44-73 (ELGTQFQPRQKNFMRREVDLERLFAEMPDY) is cleaved from the precursor.

Belongs to the non-disulfide-bridged peptide (NDBP) superfamily. Short antimicrobial peptide (group 4) family. Expressed by the venom gland.

Its subcellular location is the secreted. It is found in the target cell membrane. Its function is as follows. Cationic host defense peptide that have antibacterial activity by breaking membranes. Is more effective on Gram-positive than on Gram-negative bacteria. The chain is Mucroporin-like peptide from Lychas mucronatus (Chinese swimming scorpion).